A 461-amino-acid polypeptide reads, in one-letter code: Steroidogenic factor 1 (461 aa).

A DNA-binding region (nuclear receptor) is located at residues 10–85; that stretch reads DELCPVCGDK…VGMRLEAVRA (76 aa). An NR C4-type zinc finger spans residues 13-33; sequence CPVCGDKVSGYHYGLLTCESC. N6-acetyllysine is present on residues Lys-34, Lys-38, and Lys-72. The NR C4-type zinc-finger motif lies at 49–73; it reads CTESQSCKIDKTQRKRCPFCRFQKC. A Glycyl lysine isopeptide (Lys-Gly) (interchain with G-Cter in SUMO) cross-link involves residue Lys-119. The interval 119–157 is disordered; sequence KLETGPPMGVPPPPPPAPDYVLPPSLHGPEPKGLAAGPP. A compositionally biased stretch (pro residues) spans 126–136; it reads MGVPPPPPPAP. Lys-194 participates in a covalent cross-link: Glycyl lysine isopeptide (Lys-Gly) (interchain with G-Cter in SUMO). Ser-203 is modified (phosphoserine; by CDK7). One can recognise an NR LBD domain in the interval 222-459; sequence NVPELILQLL…NLLIEMLQAK (238 aa). The important for dimerization stretch occupies residues 230–461; it reads LLQLEPDEDQ…LIEMLQAKQT (232 aa). A 1,2-diacyl-sn-glycero-3-phosphocholine contacts are provided by Gly-341, Tyr-436, and Lys-440. 3 residues coordinate a 1,2-diacylglycero-3-phosphoethanolamine: Gly-341, Tyr-436, and Lys-440.

Belongs to the nuclear hormone receptor family. NR5 subfamily. In terms of assembly, binds DNA as a monomer. Interacts with NR0B2 and PPARGC1A. Part of a complex consisting of SFPQ, NONO and NR5A1. Interacts with NCOA2. Interacts with DGKQ and CDK7. Binds to and activated by HIPK3. Acetylation stimulates the transcriptional activity. In terms of processing, sumoylation reduces CDK7-mediated phosphorylation on Ser-203. Post-translationally, phosphorylated on Ser-203 by CDK7. This phosphorylation promotes transcriptional activity. High expressed in the adrenal cortex, the ovary, the testis, and the spleen.

The protein resides in the nucleus. Functionally, transcriptional activator. Essential for sexual differentiation and formation of the primary steroidogenic tissues. Binds to the Ad4 site found in the promoter region of steroidogenic P450 genes such as CYP11A, CYP11B and CYP21B. Also regulates the AMH/Muellerian inhibiting substance gene as well as the AHCH and STAR genes. 5'-YCAAGGYC-3' and 5'-RRAGGTCA-3' are the consensus sequences for the recognition by NR5A1. The SFPQ-NONO-NR5A1 complex binds to the CYP17 promoter and regulates basal and cAMP-dependent transcriptional activity. Binds phosphatidylcholine. Binds phospholipids with a phosphatidylinositol (PI) headgroup, in particular PI(3,4)P2 and PI(3,4,5)P3. Activated by the phosphorylation of NR5A1 by HIPK3 leading to increased steroidogenic gene expression upon cAMP signaling pathway stimulation. The polypeptide is Steroidogenic factor 1 (NR5A1) (Homo sapiens (Human)).